We begin with the raw amino-acid sequence, 237 residues long: Cysteine-rich venom protein DIS1 (237 aa).

Residues Met1–Gly18 form the signal peptide. The SCP domain occupies Val37–Tyr165. 7 disulfides stabilise this stretch: Cys74/Cys152, Cys91/Cys166, Cys147/Cys163, Cys185/Cys192, Cys188/Cys197, Cys201/Cys234, and Cys219/Cys232. Residues Cys201–Cys234 form the ShKT domain.

It belongs to the CRISP family. In terms of tissue distribution, expressed by the venom gland.

Its subcellular location is the secreted. Weakly blocks contraction of smooth muscle elicited by high potassium-induced depolarization, but does not block caffeine-stimulated contraction. May target voltage-gated calcium channels on smooth muscle. The sequence is that of Cysteine-rich venom protein DIS1 from Dispholidus typus (Boomslang).